Reading from the N-terminus, the 748-residue chain is Phosphoenolpyruvate-dependent phosphotransferase system (748 aa).

Residues methionine 1–valine 127 form the GAF domain. A linker region spans residues glutamine 128–arginine 170. Residues isoleucine 171–leucine 748 form a PTS EI region. Histidine 356 acts as the Tele-phosphohistidine intermediate in catalysis. Phosphoenolpyruvate-binding residues include arginine 462 and arginine 498. Residues glutamate 597 and aspartate 621 each coordinate Mg(2+). Phosphoenolpyruvate contacts are provided by residues asparagine 620–aspartate 621 and arginine 631. Cysteine 668 serves as the catalytic Proton donor.

This sequence belongs to the PEP-utilizing enzyme family. Mg(2+) is required as a cofactor.

Its subcellular location is the cytoplasm. The catalysed reaction is L-histidyl-[protein] + phosphoenolpyruvate = N(pros)-phospho-L-histidyl-[protein] + pyruvate. Its function is as follows. Component of the phosphoenolpyruvate-dependent nitrogen-metabolic phosphotransferase system (nitrogen-metabolic PTS), that seems to be involved in regulating nitrogen metabolism. Enzyme I-Ntr transfers the phosphoryl group from phosphoenolpyruvate (PEP) to the phosphoryl carrier protein (NPr). Could function in the transcriptional regulation of sigma-54 dependent operons in conjunction with the NPr (PtsO) and EIIA-Ntr (PtsN) proteins. Enzyme I-Ntr is specific for NPr. The chain is Phosphoenolpyruvate-dependent phosphotransferase system (ptsP) from Salmonella typhimurium (strain LT2 / SGSC1412 / ATCC 700720).